Here is a 151-residue protein sequence, read N- to C-terminus: Large ribosomal subunit protein uL30 (151 aa).

Belongs to the universal ribosomal protein uL30 family. Part of the 50S ribosomal subunit.

The protein is Large ribosomal subunit protein uL30 of Methanothrix thermoacetophila (strain DSM 6194 / JCM 14653 / NBRC 101360 / PT) (Methanosaeta thermophila).